The following is a 373-amino-acid chain: Dimethylallyltryptophan synthase CymD (373 aa).

Asp55, Val56, and Glu64 together coordinate L-tryptophan. The active-site Nucleophile is Glu64. Residues Gln77, Lys146, Trp148, Arg205, and Lys207 each contribute to the dimethylallyl diphosphate site. Arg211 is a binding site for L-tryptophan. Tyr274 is a dimethylallyl diphosphate binding site. An L-tryptophan-binding site is contributed by Tyr326. Positions 337, 339, and 341 each coordinate dimethylallyl diphosphate. A FtsK domain is found at 346 to 373; it reads MHDVTPPPLGVSQQHHLSGQTTARGRTE.

Its function is as follows. Dimethylallyltryptophan synthase; part of the gene cluster that mediates the biosynthesis of cyclic heptapeptides, known as cyclomarins and also of cyclic dipeptides, called cyclomarazines, which have both antimicrobial and cytotoxic effects. Catalyzes the reverse N-prenylation of monomeric L-tryptophan with dimethylallyl diphosphate (DMAPP) to form N-(1,1-dimethylallyl)-tryptophan (r-N-DMAT). The formation of r-N-DMAT appears to proceed via the deprotonation of the indole nitrogen of tryptophan, which facilitates a nucleophilic attack on the carbocation that is forming on the dimethylallyl group as the diphosphate dissociates. The N-(1,1-dimethylallyl)-tryptophan produced by CymD is combined with a range of standard and nonproteinogenic amino acid substrates to synthesize the peptides, a process that is probably catalyzed by the non-canonical nonribosomal peptide synthetase (NRPS), CymA. Other proteins in the cluster catalyze further modifications of the peptides including CymV which catalyzes the oxidation of olefinic cyclomarins and cyclomarazines to their respective epoxide derivatives. Utilizes only DMAPP as the prenyl donor and has no requirement for divalent cations. The sequence is that of Dimethylallyltryptophan synthase CymD from Salinispora arenicola (strain CNS-205).